Consider the following 30-residue polypeptide: Photosystem I reaction center subunit XII (30 aa).

The chain crosses the membrane as a helical span at residues 6–26; sequence VFTILAIALVPAVMAALLGSA.

Belongs to the PsaM family.

The protein localises to the cellular thylakoid membrane. This Synechococcus sp. (strain JA-3-3Ab) (Cyanobacteria bacterium Yellowstone A-Prime) protein is Photosystem I reaction center subunit XII.